Here is a 48-residue protein sequence, read N- to C-terminus: Fimbrial assembly protein, serogroup A1 (48 aa).

The protein is Fimbrial assembly protein, serogroup A1 (fimB) of Dichelobacter nodosus (Bacteroides nodosus).